The sequence spans 899 residues: Linoleate 13S-lipoxygenase 2-1, chloroplastic (899 aa).

Residues 1-40 (MLKPQLQQSSQSTKALIPSWNTNPLFLASFPINILNKNFR) constitute a chloroplast transit peptide. In terms of domain architecture, PLAT spans 78 to 200 (VQKQVNLNLS…DNPDKRIFFT (123 aa)). The Lipoxygenase domain maps to 203 to 899 (SYLPSQTPSG…GKGVPYSISI (697 aa)). The tract at residues 252 to 287 (SNNDDAKRPVLGGKELPYPRRCKTGRPRSKKDPLSE) is disordered. Residues 271–280 (RRCKTGRPRS) show a composition bias toward basic residues. Residues His557, His562, His749, Asn753, and Ile899 each contribute to the Fe cation site.

Belongs to the lipoxygenase family. In terms of assembly, monomer. Requires Fe cation as cofactor. In terms of tissue distribution, expressed in leaves and floral buds.

It is found in the plastid. The protein localises to the chloroplast stroma. Its subcellular location is the chloroplast thylakoid. It catalyses the reaction (9Z,12Z)-octadecadienoate + O2 = (13S)-hydroperoxy-(9Z,11E)-octadecadienoate. The enzyme catalyses (9Z,12Z,15Z)-octadecatrienoate + O2 = (13S)-hydroperoxy-(9Z,11E,15Z)-octadecatrienoate. The protein operates within lipid metabolism; oxylipin biosynthesis. Plant lipoxygenase involved in a number of diverse aspects of plant physiology including growth and development, pest resistance, and senescence. May not be involved in the bulk production of jasmonate upon wounding. Catalyzes the hydroperoxidation of lipids containing a cis,cis-1,4-pentadiene structure. Linolenic acid is the preferred substrate, before linoleic and arachidonic acids. Also has some activity with phosphatidylglycerol, but not with galactolipids. This chain is Linoleate 13S-lipoxygenase 2-1, chloroplastic, found in Solanum tuberosum (Potato).